The following is a 708-amino-acid chain: MINPIVKTIELGDGRTITLETGKLAKQADGSVMLRMGNTMLLATVCAAKDAVPGTDFMPLQVEYKEKFAAFGRFPGGFTKREGRASDYEILTCRLVDRALRPLFPDNYHAEVYVNIILFSADGVDMPDALAGLAASAALAVSDIPFNGPISEVRVARIDGKFVINPTFDQLEQADMDIMVAATYENIMMVEGEMSEVSEAELLEAMKVAHEAIKVHCKAQMELTEMVGKTVKREYCHEENDEELRKAVHDACYDKSYAIAASGNRNKHERQDAFDAIRDEFKAQFSEEELEEKGALIDRYYHDVEKEAMRRCILDEGKRLDGRKTTEIRPIWCEVGYLPGPHGSAIFTRGETQSLTSVTLGTKLDEKIIDDVLAHGKERFLLHYNFPPFSTGEAKAQRGVGRREIGHGNLAHRALKRMIPEDYPYVVRVVSDILESNGSSSMATVCAGTLALMDAGVKIKKPVSGIAMGLIKNAGEEKYAVLSDILGDEDHLGDMDFKVTGTKDGITATQMDIKVDGLSYEILERALNQAKEGRMHILGKIEETISEPRTELKDHAPRIETMTIPKEFIGAVIGPGGKIIQGMQEETGATITIEEIDNVGRIEISGTNKKSIDDAIRLIKGIVAVPEVGEVYKGKVRSIMPYGAFVEFLPGKDGLLHISEIDWKRLETVEEAGIKEGDEIEVKLIDIDPKTGKFKLSRKVLLPRPEKK.

2 residues coordinate Mg(2+): D490 and D496. The region spanning 557–619 (PRIETMTIPK…KSIDDAIRLI (63 aa)) is the KH domain. The 71-residue stretch at 629 to 699 (GEVYKGKVRS…KTGKFKLSRK (71 aa)) folds into the S1 motif domain.

The protein belongs to the polyribonucleotide nucleotidyltransferase family. Mg(2+) serves as cofactor.

It localises to the cytoplasm. The catalysed reaction is RNA(n+1) + phosphate = RNA(n) + a ribonucleoside 5'-diphosphate. Functionally, involved in mRNA degradation. Catalyzes the phosphorolysis of single-stranded polyribonucleotides processively in the 3'- to 5'-direction. The protein is Polyribonucleotide nucleotidyltransferase of Bacteroides fragilis (strain ATCC 25285 / DSM 2151 / CCUG 4856 / JCM 11019 / LMG 10263 / NCTC 9343 / Onslow / VPI 2553 / EN-2).